Here is a 258-residue protein sequence, read N- to C-terminus: Phosphonates import ATP-binding protein PhnC 3 (258 aa).

Residues 2–246 form the ABC transporter domain; the sequence is IEFKNVSLVY…TFEEIYGRKI (245 aa). 35-42 contributes to the ATP binding site; the sequence is GLSGAGKS.

The protein belongs to the ABC transporter superfamily. Phosphonates importer (TC 3.A.1.9.1) family. The complex is composed of two ATP-binding proteins (PhnC), two transmembrane proteins (PhnE) and a solute-binding protein (PhnD).

Its subcellular location is the cell membrane. It catalyses the reaction phosphonate(out) + ATP + H2O = phosphonate(in) + ADP + phosphate + H(+). In terms of biological role, part of the ABC transporter complex PhnCDE involved in phosphonates import. Responsible for energy coupling to the transport system. The chain is Phosphonates import ATP-binding protein PhnC 3 from Halalkalibacterium halodurans (strain ATCC BAA-125 / DSM 18197 / FERM 7344 / JCM 9153 / C-125) (Bacillus halodurans).